We begin with the raw amino-acid sequence, 78 residues long: Small ribosomal subunit protein bS18 (78 aa).

This sequence belongs to the bacterial ribosomal protein bS18 family. Part of the 30S ribosomal subunit. Forms a tight heterodimer with protein bS6.

Functionally, binds as a heterodimer with protein bS6 to the central domain of the 16S rRNA, where it helps stabilize the platform of the 30S subunit. This is Small ribosomal subunit protein bS18 from Pseudothermotoga lettingae (strain ATCC BAA-301 / DSM 14385 / NBRC 107922 / TMO) (Thermotoga lettingae).